The primary structure comprises 343 residues: 3-dehydroquinate synthase (343 aa).

NAD(+) is bound by residues 86-90 (GALLD), 110-111 (TT), lysine 123, and lysine 132. Residues glutamate 165, histidine 229, and histidine 243 each contribute to the Zn(2+) site.

It belongs to the sugar phosphate cyclases superfamily. Dehydroquinate synthase family. Requires Co(2+) as cofactor. The cofactor is Zn(2+). NAD(+) serves as cofactor.

It is found in the cytoplasm. The catalysed reaction is 7-phospho-2-dehydro-3-deoxy-D-arabino-heptonate = 3-dehydroquinate + phosphate. It functions in the pathway metabolic intermediate biosynthesis; chorismate biosynthesis; chorismate from D-erythrose 4-phosphate and phosphoenolpyruvate: step 2/7. Functionally, catalyzes the conversion of 3-deoxy-D-arabino-heptulosonate 7-phosphate (DAHP) to dehydroquinate (DHQ). This chain is 3-dehydroquinate synthase, found in Pyrobaculum islandicum (strain DSM 4184 / JCM 9189 / GEO3).